The following is a 487-amino-acid chain: Aspartyl/glutamyl-tRNA(Asn/Gln) amidotransferase subunit B (487 aa).

This sequence belongs to the GatB/GatE family. GatB subfamily. As to quaternary structure, heterotrimer of A, B and C subunits.

The catalysed reaction is L-glutamyl-tRNA(Gln) + L-glutamine + ATP + H2O = L-glutaminyl-tRNA(Gln) + L-glutamate + ADP + phosphate + H(+). It catalyses the reaction L-aspartyl-tRNA(Asn) + L-glutamine + ATP + H2O = L-asparaginyl-tRNA(Asn) + L-glutamate + ADP + phosphate + 2 H(+). Its function is as follows. Allows the formation of correctly charged Asn-tRNA(Asn) or Gln-tRNA(Gln) through the transamidation of misacylated Asp-tRNA(Asn) or Glu-tRNA(Gln) in organisms which lack either or both of asparaginyl-tRNA or glutaminyl-tRNA synthetases. The reaction takes place in the presence of glutamine and ATP through an activated phospho-Asp-tRNA(Asn) or phospho-Glu-tRNA(Gln). The sequence is that of Aspartyl/glutamyl-tRNA(Asn/Gln) amidotransferase subunit B from Roseiflexus sp. (strain RS-1).